The following is a 78-amino-acid chain: Small ribosomal subunit protein bS18 (78 aa).

It belongs to the bacterial ribosomal protein bS18 family. In terms of assembly, part of the 30S ribosomal subunit. Forms a tight heterodimer with protein bS6.

Binds as a heterodimer with protein bS6 to the central domain of the 16S rRNA, where it helps stabilize the platform of the 30S subunit. The polypeptide is Small ribosomal subunit protein bS18 (Parafrankia sp. (strain EAN1pec)).